A 558-amino-acid chain; its full sequence is MTDASVKYRPYPTINIPDRTWPGKTIDKAPIWCSVDLRDGNQSLVNPMGHDRKARMFKLLLEMGFKEIEIGFPSASQTDFDFARWCVEEGNVPDDVSLQVLVQCRPELITRTFEALEGANKPIIHFYNSTSELQRRVVFGKDVHGIKQIAVDAAKMITDMAAKAGGGFRFEYSPESFTGTELEVALEICNAVVEVVKPTADNKLILNLPSTVEMATPNIYADQIEWMCRNIDNRENVIISLHPHNDRGTGIAATELALMAGADRVEGTLFGNGERTGNVDVVTLALNMYTQGVDPELDCRDIERIKAVYEYSNEMTIPERHPYVGELVYTAFSGSHQDAINKGMKAIKVANHPVWEVPYLPIDPKDVGRSYEAIIRINSQSGKGGIAYILQQDYGINLPRNLQVEFREDIQRITDEEGVELPAKRIYERFIERYVTQPNARIKFVDHHTYPAGDFKGVRIVAAEITDNGEVKRIEGKGTGPIDGFINALSVYLGVDLSVNDYSEHSLQHGSNASAIAYVEMEHPGGKLFGAGVNTNIVAASLEAIVSAANRVLEERAK.

In terms of domain architecture, Pyruvate carboxyltransferase spans 30-303 (PIWCSVDLRD…DPELDCRDIE (274 aa)). The Mg(2+) site is built by Asp39, His242, His244, and Asn278. The regulatory domain stretch occupies residues 437-558 (QPNARIKFVD…ANRVLEERAK (122 aa)).

The protein belongs to the alpha-IPM synthase/homocitrate synthase family. LeuA type 2 subfamily. Homodimer. Requires Mg(2+) as cofactor.

The protein resides in the cytoplasm. It catalyses the reaction 3-methyl-2-oxobutanoate + acetyl-CoA + H2O = (2S)-2-isopropylmalate + CoA + H(+). It functions in the pathway amino-acid biosynthesis; L-leucine biosynthesis; L-leucine from 3-methyl-2-oxobutanoate: step 1/4. Catalyzes the condensation of the acetyl group of acetyl-CoA with 3-methyl-2-oxobutanoate (2-ketoisovalerate) to form 3-carboxy-3-hydroxy-4-methylpentanoate (2-isopropylmalate). This is 2-isopropylmalate synthase from Agrobacterium fabrum (strain C58 / ATCC 33970) (Agrobacterium tumefaciens (strain C58)).